The sequence spans 429 residues: 4-hydroxyphenylacetate degradation bifunctional isomerase/decarboxylase (429 aa).

2 Approximate repeats span residues 1-215 and 216-429; these read MKGT…RKSF and PTLP…ETAK. Residues glutamate 276, glutamate 278, and aspartate 307 each coordinate a divalent metal cation.

It belongs to the FAH family. In terms of assembly, monomer. It depends on Mg(2+) as a cofactor.

It catalyses the reaction (2E,4Z)-5-hydroxypenta-2,4-diene-1,2,5-tricarboxylate = (3E,5R)-5-carboxy-2-oxohept-3-enedioate. The enzyme catalyses (3E,5R)-5-carboxy-2-oxohept-3-enedioate + H(+) = (4Z)-2-oxohept-4-enedioate + CO2. It functions in the pathway aromatic compound metabolism; 4-hydroxyphenylacetate degradation; pyruvate and succinate semialdehyde from 4-hydroxyphenylacetate: step 4/7. Its pathway is aromatic compound metabolism; 4-hydroxyphenylacetate degradation; pyruvate and succinate semialdehyde from 4-hydroxyphenylacetate: step 5/7. Decarboxylates OPET (5-oxo-pent-3-ene-1,2,5-tricarboxylic acid) into HHDD (2-hydroxy-hept-2,4-diene-1,7-dioate) and isomerizes it to OHED (2-oxo-hept-3-ene-1,7-dioate). This Escherichia coli protein is 4-hydroxyphenylacetate degradation bifunctional isomerase/decarboxylase (hpaG).